Reading from the N-terminus, the 553-residue chain is Putative transport protein CKO_00031 (553 aa).

5 helical membrane-spanning segments follow: residues 4 to 24, 28 to 48, 65 to 85, 95 to 115, and 158 to 178; these read IALT…IGNI, GVGF…HFVD, FGLI…FFAS, LFAI…HKIF, and MSYA…MWLM. 2 consecutive RCK C-terminal domains span residues 192 to 276 and 279 to 361; these read QHED…VIGQ and DTSL…VVGN. Helical transmembrane passes span 371–391, 393–413, 437–457, 464–484, 493–513, and 533–553; these read MLPV…PLFV, GFPV…ALIL, LGIV…FIDT, LSWI…VGLL, YLTL…LAFA, and LVMF…WGLG.

This sequence belongs to the AAE transporter (TC 2.A.81) family. YidE subfamily.

The protein localises to the cell membrane. This chain is Putative transport protein CKO_00031, found in Citrobacter koseri (strain ATCC BAA-895 / CDC 4225-83 / SGSC4696).